The sequence spans 316 residues: tRNA dimethylallyltransferase (316 aa).

An ATP-binding site is contributed by 17–24 (GPTASGKT). Substrate is bound at residue 19 to 24 (TASGKT). Interaction with substrate tRNA regions lie at residues 42 to 45 (DSAL), 166 to 170 (QRLSR), and 247 to 252 (RCVGYR).

Belongs to the IPP transferase family. As to quaternary structure, monomer. Requires Mg(2+) as cofactor.

The catalysed reaction is adenosine(37) in tRNA + dimethylallyl diphosphate = N(6)-dimethylallyladenosine(37) in tRNA + diphosphate. Catalyzes the transfer of a dimethylallyl group onto the adenine at position 37 in tRNAs that read codons beginning with uridine, leading to the formation of N6-(dimethylallyl)adenosine (i(6)A). This chain is tRNA dimethylallyltransferase, found in Salmonella schwarzengrund (strain CVM19633).